Reading from the N-terminus, the 156-residue chain is ATP synthase subunit b (156 aa).

The chain crosses the membrane as a helical span at residues 7–29; that stretch reads LIGQSVAFLIFVWFCMKFVWPPL.

It belongs to the ATPase B chain family. As to quaternary structure, F-type ATPases have 2 components, F(1) - the catalytic core - and F(0) - the membrane proton channel. F(1) has five subunits: alpha(3), beta(3), gamma(1), delta(1), epsilon(1). F(0) has three main subunits: a(1), b(2) and c(10-14). The alpha and beta chains form an alternating ring which encloses part of the gamma chain. F(1) is attached to F(0) by a central stalk formed by the gamma and epsilon chains, while a peripheral stalk is formed by the delta and b chains.

The protein localises to the cell inner membrane. F(1)F(0) ATP synthase produces ATP from ADP in the presence of a proton or sodium gradient. F-type ATPases consist of two structural domains, F(1) containing the extramembraneous catalytic core and F(0) containing the membrane proton channel, linked together by a central stalk and a peripheral stalk. During catalysis, ATP synthesis in the catalytic domain of F(1) is coupled via a rotary mechanism of the central stalk subunits to proton translocation. In terms of biological role, component of the F(0) channel, it forms part of the peripheral stalk, linking F(1) to F(0). This is ATP synthase subunit b from Shewanella denitrificans (strain OS217 / ATCC BAA-1090 / DSM 15013).